A 429-amino-acid polypeptide reads, in one-letter code: Alpha-galactosidase A (429 aa).

Positions M1–A31 are cleaved as a signal peptide. 2 disulfides stabilise this stretch: C52–C94 and C56–C63. An N-linked (GlcNAc...) asparagine glycan is attached at N139. Residues C142 and C172 are joined by a disulfide bond. D170 functions as the Nucleophile in the catalytic mechanism. N-linked (GlcNAc...) asparagine glycosylation is present at N192. C202 and C223 are disulfide-bonded. E203–Y207 is a substrate binding site. A glycan (N-linked (GlcNAc...) asparagine) is linked at N215. D231 acts as the Proton donor in catalysis. C378 and C382 form a disulfide bridge.

This sequence belongs to the glycosyl hydrolase 27 family. Homodimer.

It localises to the lysosome. It catalyses the reaction Hydrolysis of terminal, non-reducing alpha-D-galactose residues in alpha-D-galactosides, including galactose oligosaccharides, galactomannans and galactolipids.. It carries out the reaction a globoside Gb3Cer (d18:1(4E)) + H2O = a beta-D-Gal-(1-&gt;4)-beta-D-Glc-(1&lt;-&gt;1)-Cer(d18:1(4E)) + D-galactose. The enzyme catalyses a globoside Gb3Cer + H2O = a beta-D-galactosyl-(1-&gt;4)-beta-D-glucosyl-(1&lt;-&gt;1)-ceramide + D-galactose. Galactosylgalactosylglucosylceramidase activity is stimulated by saposin B and ammonium chloride. Catalyzes the hydrolysis of glycosphingolipids and participates in their degradation in the lysosome. This is Alpha-galactosidase A from Homo sapiens (Human).